Reading from the N-terminus, the 37-residue chain is Cytochrome b6-f complex subunit 5 (37 aa).

A helical transmembrane segment spans residues 5 to 25; that stretch reads FLFGIVLGLIPITLAGLFVTA.

Belongs to the PetG family. As to quaternary structure, the 4 large subunits of the cytochrome b6-f complex are cytochrome b6, subunit IV (17 kDa polypeptide, PetD), cytochrome f and the Rieske protein, while the 4 small subunits are PetG, PetL, PetM and PetN. The complex functions as a dimer.

The protein localises to the plastid thylakoid membrane. Its function is as follows. Component of the cytochrome b6-f complex, which mediates electron transfer between photosystem II (PSII) and photosystem I (PSI), cyclic electron flow around PSI, and state transitions. PetG is required for either the stability or assembly of the cytochrome b6-f complex. The sequence is that of Cytochrome b6-f complex subunit 5 from Cuscuta reflexa (Southern Asian dodder).